A 386-amino-acid polypeptide reads, in one-letter code: Succinate--CoA ligase [ADP-forming] subunit beta (386 aa).

An ATP-grasp domain is found at Lys-9–Glu-244. ATP contacts are provided by residues Lys-46, Gly-53–Gly-55, Glu-99, Cys-102, and Glu-107. Mg(2+) contacts are provided by Asn-199 and Asp-213. Residues Asn-264 and Gly-321–Met-323 contribute to the substrate site.

This sequence belongs to the succinate/malate CoA ligase beta subunit family. In terms of assembly, heterotetramer of two alpha and two beta subunits. It depends on Mg(2+) as a cofactor.

The catalysed reaction is succinate + ATP + CoA = succinyl-CoA + ADP + phosphate. It catalyses the reaction GTP + succinate + CoA = succinyl-CoA + GDP + phosphate. It functions in the pathway carbohydrate metabolism; tricarboxylic acid cycle; succinate from succinyl-CoA (ligase route): step 1/1. Functionally, succinyl-CoA synthetase functions in the citric acid cycle (TCA), coupling the hydrolysis of succinyl-CoA to the synthesis of either ATP or GTP and thus represents the only step of substrate-level phosphorylation in the TCA. The beta subunit provides nucleotide specificity of the enzyme and binds the substrate succinate, while the binding sites for coenzyme A and phosphate are found in the alpha subunit. This Bacillus cereus (strain ATCC 14579 / DSM 31 / CCUG 7414 / JCM 2152 / NBRC 15305 / NCIMB 9373 / NCTC 2599 / NRRL B-3711) protein is Succinate--CoA ligase [ADP-forming] subunit beta.